Here is a 287-residue protein sequence, read N- to C-terminus: Acetylglutamate kinase (287 aa).

Substrate is bound by residues 64-65 (GG), Arg-86, and Asn-185.

The protein belongs to the acetylglutamate kinase family. ArgB subfamily.

The protein localises to the cytoplasm. It catalyses the reaction N-acetyl-L-glutamate + ATP = N-acetyl-L-glutamyl 5-phosphate + ADP. Its pathway is amino-acid biosynthesis; L-arginine biosynthesis; N(2)-acetyl-L-ornithine from L-glutamate: step 2/4. Its function is as follows. Catalyzes the ATP-dependent phosphorylation of N-acetyl-L-glutamate. The protein is Acetylglutamate kinase of Hydrogenobaculum sp. (strain Y04AAS1).